Consider the following 362-residue polypeptide: Exopolygalacturonase (362 aa).

PbH1 repeat units lie at residues 138–164 (CKNLTFERFKISAAETSINTDGIHIGR), 165–186 (SDGVNIINTEIKTGDDCISLGD), 188–208 (SKNINITNITCGPGHGISVGS), and 218–239 (VVGIYVKNCTITGSQNGVRIKT). N-linked (GlcNAc...) asparagine glycosylation is present at asparagine 140. Catalysis depends on aspartate 179, which acts as the Proton donor. Asparagine 192 and asparagine 195 each carry an N-linked (GlcNAc...) asparagine glycan. Residue histidine 202 is part of the active site. Asparagine 225 carries an N-linked (GlcNAc...) asparagine glycan.

Belongs to the glycosyl hydrolase 28 family. Pollen tubes growing through the style during pollination.

Its subcellular location is the secreted. It localises to the cell wall. The enzyme catalyses [(1-&gt;4)-alpha-D-galacturonosyl](n) + H2O = alpha-D-galacturonate + [(1-&gt;4)-alpha-D-galacturonosyl](n-1). Functionally, may function in depolymerizing pectin during pollen development, germination, and tube growth. Acts as an exo-polygalacturonase. In Oenothera organensis (Evening primrose), this protein is Exopolygalacturonase.